The chain runs to 291 residues: Pantothenate synthetase 1 (291 aa).

The active-site Proton donor is the His-37. 147-150 is a binding site for ATP; it reads GEKD. Gln-153 is a binding site for (R)-pantoate. Residue 184 to 187 coordinates ATP; sequence ISSR.

The protein belongs to the pantothenate synthetase family. As to quaternary structure, homodimer.

The protein localises to the cytoplasm. The catalysed reaction is (R)-pantoate + beta-alanine + ATP = (R)-pantothenate + AMP + diphosphate + H(+). The protein operates within cofactor biosynthesis; (R)-pantothenate biosynthesis; (R)-pantothenate from (R)-pantoate and beta-alanine: step 1/1. Its function is as follows. Catalyzes the condensation of pantoate with beta-alanine in an ATP-dependent reaction via a pantoyl-adenylate intermediate. This is Pantothenate synthetase 1 from Frankia alni (strain DSM 45986 / CECT 9034 / ACN14a).